The following is a 423-amino-acid chain: Type II methyltransferase M.NgoBV (423 aa).

The region spanning 4–423 (IKFIDLFSGM…AVSERLLHTL (420 aa)) is the SAM-dependent MTase C5-type domain. Cysteine 80 is a catalytic residue.

This sequence belongs to the class I-like SAM-binding methyltransferase superfamily. C5-methyltransferase family.

The enzyme catalyses a 2'-deoxycytidine in DNA + S-adenosyl-L-methionine = a 5-methyl-2'-deoxycytidine in DNA + S-adenosyl-L-homocysteine + H(+). In terms of biological role, a methylase, recognizes the double-stranded sequence 5'-GGNNCC-3', methylates C-5 on both strands, and protects the DNA from cleavage by the NgoBV endonuclease. This chain is Type II methyltransferase M.NgoBV (ngoBVM), found in Neisseria gonorrhoeae.